Reading from the N-terminus, the 305-residue chain is Nucleotide-binding protein Mpe_A3336 (305 aa).

22–29 is an ATP binding site; sequence GISGSGKS. Residue 74 to 77 coordinates GTP; the sequence is DVRS.

It belongs to the RapZ-like family.

Displays ATPase and GTPase activities. The chain is Nucleotide-binding protein Mpe_A3336 from Methylibium petroleiphilum (strain ATCC BAA-1232 / LMG 22953 / PM1).